The following is a 110-amino-acid chain: Protein RALF-like 4 (110 aa).

An N-terminal signal peptide occupies residues 1 to 23 (MGVKMLLIFGLLILAMVAKSVNA). A propeptide spans 24-58 (TYPLTKSCINGQGCIGEDDELESLMDSETNRRQLA) (removed in mature form). 2 disulfide bridges follow: Cys76-Cys86 and Cys99-Cys105.

The protein belongs to the plant rapid alkalinization factor (RALF) family. Proteolytically cleaved, probably by S1P, a subtilisin-like serine protease (subtilase).

Its subcellular location is the secreted. Functionally, cell signaling peptide that may regulate plant stress, growth, and development. Mediates a rapid alkalinization of extracellular space by mediating a transient increase in the cytoplasmic Ca(2+) concentration leading to a calcium-dependent signaling events through a cell surface receptor and a concomitant activation of some intracellular mitogen-activated protein kinases. This Arabidopsis thaliana (Mouse-ear cress) protein is Protein RALF-like 4 (RALFL4).